A 422-amino-acid chain; its full sequence is Enolase (422 aa).

A (2R)-2-phosphoglycerate-binding site is contributed by Q162. The active-site Proton donor is the E204. Mg(2+) contacts are provided by D241, E284, and D311. Positions 336, 365, 366, and 387 each coordinate (2R)-2-phosphoglycerate. K336 (proton acceptor) is an active-site residue.

Belongs to the enolase family. In terms of assembly, component of the RNA degradosome, a multiprotein complex involved in RNA processing and mRNA degradation. Requires Mg(2+) as cofactor.

Its subcellular location is the cytoplasm. The protein localises to the secreted. It localises to the cell surface. The enzyme catalyses (2R)-2-phosphoglycerate = phosphoenolpyruvate + H2O. The protein operates within carbohydrate degradation; glycolysis; pyruvate from D-glyceraldehyde 3-phosphate: step 4/5. In terms of biological role, catalyzes the reversible conversion of 2-phosphoglycerate (2-PG) into phosphoenolpyruvate (PEP). It is essential for the degradation of carbohydrates via glycolysis. The chain is Enolase from Legionella pneumophila (strain Paris).